Reading from the N-terminus, the 1721-residue chain is Latent-transforming growth factor beta-binding protein 1 (1721 aa).

Residues Met1–Gly23 form the signal peptide. Positions Arg64–Ser81 are enriched in low complexity. The segment at Arg64 to His158 is disordered. Positions Arg99–Pro111 are enriched in pro residues. Residues Ala112–Pro130 are compositionally biased toward low complexity. The region spanning Thr187–Glu219 is the EGF-like 1 domain. 3 cysteine pairs are disulfide-bonded: Cys191–Cys201, Cys195–Cys207, and Cys209–Cys218. The interval Ser228–Thr259 is disordered. Residues Asn347 and Asn378 are each glycosylated (N-linked (GlcNAc...) asparagine). The EGF-like 2 domain maps to Arg399 to Gln431. Cystine bridges form between Cys403–Cys413, Cys407–Cys419, Cys421–Cys430, Cys559–Cys581, Cys568–Cys594, and Cys582–Cys597. Residue Asn424 is glycosylated (N-linked (GlcNAc...) asparagine). Residues Gly557–Met609 form the TB 1 domain. Residue Asn620 is glycosylated (N-linked (GlcNAc...) asparagine). Residues Asp626 to Ser663 form the EGF-like 3; calcium-binding domain. Cystine bridges form between Cys630/Cys641, Cys636/Cys650, Cys652/Cys665, Cys679/Cys702, Cys689/Cys714, Cys703/Cys717, and Cys704/Cys729. Ser647 carries an O-linked (Glc) serine glycan. One can recognise a TB 2 domain in the interval Gly677–Cys729. The tract at residues Val750–Leu811 is disordered. 2 O-linked (GalNAc...) threonine glycosylation sites follow: Thr769 and Thr801. Residues Glu873–Gln910 form the EGF-like 4; calcium-binding domain. 29 disulfides stabilise this stretch: Cys877/Cys889, Cys884/Cys898, Cys900/Cys913, Cys919/Cys931, Cys926/Cys940, Cys942/Cys955, Cys961/Cys972, Cys967/Cys981, Cys984/Cys996, Cys1002/Cys1013, Cys1008/Cys1022, Cys1025/Cys1036, Cys1042/Cys1053, Cys1048/Cys1062, Cys1064/Cys1077, Cys1083/Cys1094, Cys1089/Cys1103, Cys1105/Cys1118, Cys1124/Cys1135, Cys1130/Cys1144, Cys1146/Cys1159, Cys1165/Cys1177, Cys1172/Cys1186, Cys1188/Cys1200, Cys1206/Cys1218, Cys1212/Cys1227, Cys1229/Cys1242, Cys1248/Cys1260, and Cys1254/Cys1269. The EGF-like 5; calcium-binding domain maps to Asp915–Ile956. O-linked (Glc) serine glycosylation occurs at Ser937. The 41-residue stretch at Asp957–Glu997 folds into the EGF-like 6; calcium-binding domain. Residue Asn974 is modified to (3R)-3-hydroxyasparagine. The 40-residue stretch at Asp998–Leu1037 folds into the EGF-like 7; calcium-binding domain. O-linked (Glc) serine glycosylation occurs at Ser1019. The 41-residue stretch at Asp1038–Arg1078 folds into the EGF-like 8; calcium-binding domain. Ser1059 carries an O-linked (Glc) serine glycan. In terms of domain architecture, EGF-like 9; calcium-binding spans Asp1079–Glu1119. The 41-residue stretch at Asp1120–Glu1160 folds into the EGF-like 10; calcium-binding domain. Asn1137 is modified ((3R)-3-hydroxyasparagine). Ser1141 carries O-linked (Glc) serine glycosylation. Residues Asp1161–Gln1201 form the EGF-like 11; calcium-binding domain. A Cell attachment site motif is present at residues Arg1174 to Asp1176. Residue Asn1197 is glycosylated (N-linked (GlcNAc...) asparagine). In terms of domain architecture, EGF-like 12; calcium-binding spans Asp1202–Glu1243. Ser1224 carries O-linked (Glc) serine glycosylation. Residues Asp1244–Gly1281 enclose the EGF-like 13; calcium-binding domain. Asn1250 carries an N-linked (GlcNAc...) asparagine glycan. The EGF-like 14; calcium-binding domain maps to Asp1286 to Arg1328. Positions Glu1344–Gly1411 are 8-Cys3 region. The 55-residue stretch at Lys1347–Cys1401 folds into the TB 3 domain. Cystine bridges form between Cys1349–Cys1372, Cys1359–Cys1384, Cys1373–Cys1389, and Cys1374–Cys1401. N-linked (GlcNAc...) asparagine glycosylation occurs at Asn1366. At Ser1414 the chain carries Phosphoserine; by FAM20C. Positions Asp1424–Phe1466 constitute an EGF-like 15; calcium-binding domain. The 37-residue stretch at Asp1467–Glu1503 folds into the EGF-like 16; calcium-binding domain. Cystine bridges form between Cys1471–Cys1482, Cys1477–Cys1491, Cys1526–Cys1550, Cys1536–Cys1562, Cys1551–Cys1565, and Cys1552–Cys1577. Ser1488 carries O-linked (Glc) serine glycosylation. A C-terminal domain region spans residues Ile1507–Glu1721. The TB 4 domain maps to Asp1524 to Cys1577. Phosphoserine is present on residues Ser1597 and Ser1616. Residues Gln1621–Lys1657 form the EGF-like 17 domain. 5 cysteine pairs are disulfide-bonded: Cys1625–Cys1636, Cys1631–Cys1645, Cys1666–Cys1681, Cys1676–Cys1690, and Cys1692–Cys1705. Residues Asp1662–Thr1706 form the EGF-like 18; calcium-binding domain. O-linked (Glc) serine glycosylation is present at Ser1687.

The protein belongs to the LTBP family. In terms of assembly, interacts with TGFB1; associates via disulfide bonds with the Latency-associated peptide chain (LAP) regulatory chain of TGFB1, leading to regulate activation of TGF-beta-1. LTBP1 does not bind directly to TGF-beta-1, the active chain of TGFB1. Interacts (via C-terminal domain) with FBN1 (via N-terminal domain). Interacts with FBN2. Interacts with ADAMTSL2. Interacts with EFEMP2. In terms of processing, contains hydroxylated asparagine residues. Isoform Short N-terminus is blocked. Post-translationally, two intrachain disulfide bonds from the TB3 domain are rearranged upon TGFB1 binding, and form interchain bonds with TGFB1 propeptide, anchoring it to the extracellular matrix. In terms of processing, O-glycosylated on serine residues by POGLUT2 and POGLUT3. In terms of tissue distribution, expressed in the aorta (at protein level). Isoform Long: Expressed in fibroblasts.

It localises to the secreted. Its subcellular location is the extracellular space. The protein resides in the extracellular matrix. Its function is as follows. Key regulator of transforming growth factor beta (TGFB1, TGFB2 and TGFB3) that controls TGF-beta activation by maintaining it in a latent state during storage in extracellular space. Associates specifically via disulfide bonds with the Latency-associated peptide (LAP), which is the regulatory chain of TGF-beta, and regulates integrin-dependent activation of TGF-beta. Outcompeted by LRRC32/GARP for binding to LAP regulatory chain of TGF-beta. The sequence is that of Latent-transforming growth factor beta-binding protein 1 from Homo sapiens (Human).